The primary structure comprises 417 residues: F-box protein At3g07870 (417 aa).

The F-box domain occupies 22-68 (GGGLESLPEDIIADIFSRLPISSIARLMFVCRSWRSVLTQHGRLSSS).

The protein is F-box protein At3g07870 of Arabidopsis thaliana (Mouse-ear cress).